The following is a 132-amino-acid chain: uncharacterized protein (132 aa).

A run of 4 helical transmembrane segments spans residues 7 to 29, 44 to 62, 69 to 88, and 108 to 130; these read LALL…PTLF, VFPV…SLFL, LFLS…EFIV, and GVSM…ILIF.

The protein resides in the cell membrane. This is an uncharacterized protein from Aquifex aeolicus (strain VF5).